The following is a 310-amino-acid chain: Membrane protein insertase YidC 2 (310 aa).

The N-terminal stretch at 1–23 (MKKTLKRILFSSLSLSILLLLTG) is a signal peptide. The N-palmitoyl cysteine moiety is linked to residue Cys-24. Cys-24 carries the S-diacylglycerol cysteine lipid modification. 5 consecutive transmembrane segments (helical) span residues 33 to 53 (PYGVIWNTLGVPMANLITYFA), 58 to 78 (LGFGVAIIIVTIIVRVIILPL), 135 to 155 (FGGIGCLPLLIQMPFFSAIFF), 180 to 200 (LTVIIAILYFVQSWLSMQGVP), and 219 to 239 (VFMSISLPASVALYWFIGGIF). Positions 262–310 (EYTKNPPKAYKSNNARKDVTSSTKTTESNQAIITSKKTNRNAGKQKRRG) are disordered. Over residues 281–297 (TSSTKTTESNQAIITSK) the composition is skewed to polar residues. The span at 298–310 (KTNRNAGKQKRRG) shows a compositional bias: basic residues.

This sequence belongs to the OXA1/ALB3/YidC family. Type 2 subfamily.

The protein resides in the cell membrane. Required for the insertion and/or proper folding and/or complex formation of integral membrane proteins into the membrane. Involved in integration of membrane proteins that insert both dependently and independently of the Sec translocase complex, as well as at least some lipoproteins. The sequence is that of Membrane protein insertase YidC 2 from Streptococcus agalactiae serotype III (strain NEM316).